Reading from the N-terminus, the 337-residue chain is G-protein coupled receptor 26 (337 aa).

The Extracellular segment spans residues 1–10 (MNSWDAGLAG). A helical transmembrane segment spans residues 11–31 (LLVGTIGVSLLSNGLVLLCLL). Over 32–47 (HSADIRRQAPALFTLN) the chain is Cytoplasmic. Residues 48–68 (LTCGNLLCTVVNMPLTLAGVV) form a helical membrane-spanning segment. Residues 69–81 (AQRQPAGDRLCRL) are Extracellular-facing. Cysteines 79 and 156 form a disulfide. Residues 82 to 102 (AAFLDTFLAANSMLSMAALSI) form a helical membrane-spanning segment. At 103–123 (DRWVAVVFPLSYRAKMRLRDA) the chain is on the cytoplasmic side. A helical membrane pass occupies residues 124-144 (AFMVAYTWLHALTFPATALAL). Over 145–168 (SWLGFHQLYASCTLCSRRPDERLR) the chain is Extracellular. A helical transmembrane segment spans residues 169 to 189 (FAVFTSAFHALSFLLSFIVLC). Residues 190 to 245 (FTYLKVLKVARFHCKRIDVITMQTLVLLVDIHPSVRERCLEEQKRRRQRATKKIST) lie on the Cytoplasmic side of the membrane. The helical transmembrane segment at 246-266 (FIGTFLVCFAPYVITRLVELF) threads the bilayer. At 267–276 (STAPIDSHWG) the chain is on the extracellular side. The helical transmembrane segment at 277–297 (VLSKCLAYSKAASDPFVYSLL) threads the bilayer. The Cytoplasmic segment spans residues 298–337 (RHQYRRSCKELLNRIFNRRSIHSVGLTGDSHSQNILPVSE).

This sequence belongs to the G-protein coupled receptor 1 family. Detected in extracts of several brain regions including striatum, pons, cerebellum and cortex. Not detected in numerous peripheral tissue extracts, except in testis. In the brain, detected in cortical structures including the anterior cingulate area, posterior cingulate and the frontoparietal, somatosensory and piriform cortices. Prominent also in the olfactory tubercle, the islands of Calleja, ventromedial and posterior nuclei of the hypothalamus, the medial septal nucleus, nucleus of the diagonal band and the ventral tegmental area. Localized also to hippocampal structures, with signals strongest over the CA2 and CA3 regions of Ammon's horn and less so over the dentate gyrus. Expressed in the caudate putamen only in its most caudal portion, with a decreasing gradient of signal from the dorsal to ventral aspect. Strong expression associated with a single pontine structure, the inferior olivary nucleus.

It is found in the cell membrane. Its function is as follows. Orphan receptor. Displays a significant level of constitutive activity. Its effect is mediated by G(s)-alpha protein that stimulate adenylate cyclase, resulting in an elevation of intracellular cAMP. The chain is G-protein coupled receptor 26 (Gpr26) from Rattus norvegicus (Rat).